Here is a 253-residue protein sequence, read N- to C-terminus: Probable transcriptional regulatory protein TM_0466 (253 aa).

It belongs to the TACO1 family.

The protein resides in the cytoplasm. The protein is Probable transcriptional regulatory protein TM_0466 of Thermotoga maritima (strain ATCC 43589 / DSM 3109 / JCM 10099 / NBRC 100826 / MSB8).